Consider the following 184-residue polypeptide: Acyl-homoserine-lactone synthase (184 aa).

Belongs to the autoinducer synthase family.

The enzyme catalyses a fatty acyl-[ACP] + S-adenosyl-L-methionine = an N-acyl-L-homoserine lactone + S-methyl-5'-thioadenosine + holo-[ACP] + H(+). Functionally, involved in the synthesis of the acyl-homoserine lactone (AHL) signal N-(3-hydroxydodecanoyl)-L-HSL (3-hydroxy-C(12)-HSL or OH-dDHL). Required for normal biofilm development. The sequence is that of Acyl-homoserine-lactone synthase from Acinetobacter baumannii.